Consider the following 318-residue polypeptide: Electron transfer flavoprotein subunit alpha (318 aa).

257–285 (LYIALGISGAIQHRAGMQTSKTIVAVNKD) provides a ligand contact to FAD.

It belongs to the ETF alpha-subunit/FixB family. In terms of assembly, heterodimer of an alpha and a beta subunit. It depends on FAD as a cofactor.

Its function is as follows. The electron transfer flavoprotein serves as a specific electron acceptor for other dehydrogenases. It transfers the electrons to the main respiratory chain via ETF-ubiquinone oxidoreductase (ETF dehydrogenase). The sequence is that of Electron transfer flavoprotein subunit alpha (etfA) from Mycobacterium tuberculosis (strain CDC 1551 / Oshkosh).